We begin with the raw amino-acid sequence, 490 residues long: Glutamate--tRNA ligase (490 aa).

Positions 9-19 (PSPTGLQHIGG) match the 'HIGH' region motif. The 'KMSKS' region signature appears at 251-255 (KLSKR). K254 contributes to the ATP binding site.

It belongs to the class-I aminoacyl-tRNA synthetase family. Glutamate--tRNA ligase type 1 subfamily. As to quaternary structure, monomer.

It localises to the cytoplasm. It catalyses the reaction tRNA(Glu) + L-glutamate + ATP = L-glutamyl-tRNA(Glu) + AMP + diphosphate. Catalyzes the attachment of glutamate to tRNA(Glu) in a two-step reaction: glutamate is first activated by ATP to form Glu-AMP and then transferred to the acceptor end of tRNA(Glu). The chain is Glutamate--tRNA ligase from Borreliella burgdorferi (strain ATCC 35210 / DSM 4680 / CIP 102532 / B31) (Borrelia burgdorferi).